Consider the following 509-residue polypeptide: ATP synthase subunit alpha (509 aa).

ATP is bound at residue 169-176 (GDRQTGKT).

It belongs to the ATPase alpha/beta chains family. As to quaternary structure, F-type ATPases have 2 components, CF(1) - the catalytic core - and CF(0) - the membrane proton channel. CF(1) has five subunits: alpha(3), beta(3), gamma(1), delta(1), epsilon(1). CF(0) has three main subunits: a(1), b(2) and c(9-12). The alpha and beta chains form an alternating ring which encloses part of the gamma chain. CF(1) is attached to CF(0) by a central stalk formed by the gamma and epsilon chains, while a peripheral stalk is formed by the delta and b chains.

The protein localises to the cell inner membrane. It catalyses the reaction ATP + H2O + 4 H(+)(in) = ADP + phosphate + 5 H(+)(out). Produces ATP from ADP in the presence of a proton gradient across the membrane. The alpha chain is a regulatory subunit. In Methylobacterium sp. (strain 4-46), this protein is ATP synthase subunit alpha.